The primary structure comprises 366 residues: Left-right determination factor 1 (366 aa).

Residues 1–21 form the signal peptide; sequence MQPLWLCWALWVLPLASPGAA. The propeptide at 22–76 is or 135; that stretch reads LTGEQLLGSLLRQLQLKEVPTLDRADMEELVIPTHVRAQYVALLQRSHGDRSRGK. Asn158 carries N-linked (GlcNAc...) asparagine glycosylation. Cystine bridges form between Cys251–Cys264, Cys263–Cys316, Cys293–Cys351, and Cys297–Cys353.

This sequence belongs to the TGF-beta family. The processing of the protein may also occur at the second R-X-X-R site located at AA 132-135. Processing appears to be regulated in a cell-type specific manner.

Its subcellular location is the secreted. In terms of biological role, required for left-right axis determination as a regulator of LEFTY2 and NODAL. The chain is Left-right determination factor 1 (LEFTY1) from Homo sapiens (Human).